The following is a 273-amino-acid chain: Ribosomal RNA small subunit methyltransferase A (273 aa).

Residues Asn-18, Leu-20, Gly-45, Glu-66, Asp-91, and Asn-113 each contribute to the S-adenosyl-L-methionine site.

This sequence belongs to the class I-like SAM-binding methyltransferase superfamily. rRNA adenine N(6)-methyltransferase family. RsmA subfamily.

It localises to the cytoplasm. It carries out the reaction adenosine(1518)/adenosine(1519) in 16S rRNA + 4 S-adenosyl-L-methionine = N(6)-dimethyladenosine(1518)/N(6)-dimethyladenosine(1519) in 16S rRNA + 4 S-adenosyl-L-homocysteine + 4 H(+). Specifically dimethylates two adjacent adenosines (A1518 and A1519) in the loop of a conserved hairpin near the 3'-end of 16S rRNA in the 30S particle. May play a critical role in biogenesis of 30S subunits. In Escherichia coli (strain 55989 / EAEC), this protein is Ribosomal RNA small subunit methyltransferase A.